A 142-amino-acid polypeptide reads, in one-letter code: Large ribosomal subunit protein uL13 (142 aa).

This sequence belongs to the universal ribosomal protein uL13 family. As to quaternary structure, part of the 50S ribosomal subunit.

Its function is as follows. This protein is one of the early assembly proteins of the 50S ribosomal subunit, although it is not seen to bind rRNA by itself. It is important during the early stages of 50S assembly. The chain is Large ribosomal subunit protein uL13 from Treponema pallidum (strain Nichols).